Reading from the N-terminus, the 738-residue chain is 1,4-alpha-glucan branching enzyme GlgB (738 aa).

Asp-399 functions as the Nucleophile in the catalytic mechanism. Residue Glu-452 is the Proton donor of the active site.

This sequence belongs to the glycosyl hydrolase 13 family. GlgB subfamily. Monomer.

The catalysed reaction is Transfers a segment of a (1-&gt;4)-alpha-D-glucan chain to a primary hydroxy group in a similar glucan chain.. The protein operates within glycan biosynthesis; glycogen biosynthesis. Catalyzes the formation of the alpha-1,6-glucosidic linkages in glycogen by scission of a 1,4-alpha-linked oligosaccharide from growing alpha-1,4-glucan chains and the subsequent attachment of the oligosaccharide to the alpha-1,6 position. The chain is 1,4-alpha-glucan branching enzyme GlgB from Chlamydia trachomatis serovar L2b (strain UCH-1/proctitis).